A 468-amino-acid chain; its full sequence is uncharacterized protein (468 aa).

One can recognise an HTH gntR-type domain in the interval 1-69 (MKKYQQLAEQ…PQSGYYVAPQ (69 aa)). K312 is subject to N6-(pyridoxal phosphate)lysine.

The protein in the C-terminal section; belongs to the class-I pyridoxal-phosphate-dependent aminotransferase family.

This is an uncharacterized protein from Escherichia coli (strain K12).